Consider the following 181-residue polypeptide: Adenine phosphoribosyltransferase (181 aa).

Belongs to the purine/pyrimidine phosphoribosyltransferase family. In terms of assembly, homodimer.

The protein localises to the cytoplasm. It catalyses the reaction AMP + diphosphate = 5-phospho-alpha-D-ribose 1-diphosphate + adenine. The protein operates within purine metabolism; AMP biosynthesis via salvage pathway; AMP from adenine: step 1/1. Functionally, catalyzes a salvage reaction resulting in the formation of AMP, that is energically less costly than de novo synthesis. This is Adenine phosphoribosyltransferase from Vibrio atlanticus (strain LGP32) (Vibrio splendidus (strain Mel32)).